Here is a 261-residue protein sequence, read N- to C-terminus: NAD(P)H-quinone oxidoreductase subunit K, chloroplastic (261 aa).

[4Fe-4S] cluster is bound by residues C64, C65, C129, and C160.

Belongs to the complex I 20 kDa subunit family. In terms of assembly, NDH is composed of at least 16 different subunits, 5 of which are encoded in the nucleus. The cofactor is [4Fe-4S] cluster.

It localises to the plastid. The protein resides in the chloroplast thylakoid membrane. It carries out the reaction a plastoquinone + NADH + (n+1) H(+)(in) = a plastoquinol + NAD(+) + n H(+)(out). The enzyme catalyses a plastoquinone + NADPH + (n+1) H(+)(in) = a plastoquinol + NADP(+) + n H(+)(out). Functionally, NDH shuttles electrons from NAD(P)H:plastoquinone, via FMN and iron-sulfur (Fe-S) centers, to quinones in the photosynthetic chain and possibly in a chloroplast respiratory chain. The immediate electron acceptor for the enzyme in this species is believed to be plastoquinone. Couples the redox reaction to proton translocation, and thus conserves the redox energy in a proton gradient. This chain is NAD(P)H-quinone oxidoreductase subunit K, chloroplastic, found in Physcomitrium patens (Spreading-leaved earth moss).